The chain runs to 507 residues: ATP synthase subunit alpha, chloroplastic (507 aa).

170 to 177 (GDRQTGKT) serves as a coordination point for ATP.

It belongs to the ATPase alpha/beta chains family. In terms of assembly, F-type ATPases have 2 components, CF(1) - the catalytic core - and CF(0) - the membrane proton channel. CF(1) has five subunits: alpha(3), beta(3), gamma(1), delta(1), epsilon(1). CF(0) has four main subunits: a, b, b' and c.

The protein localises to the plastid. It localises to the chloroplast thylakoid membrane. It carries out the reaction ATP + H2O + 4 H(+)(in) = ADP + phosphate + 5 H(+)(out). Its function is as follows. Produces ATP from ADP in the presence of a proton gradient across the membrane. The alpha chain is a regulatory subunit. This chain is ATP synthase subunit alpha, chloroplastic, found in Eucalyptus globulus subsp. globulus (Tasmanian blue gum).